The primary structure comprises 751 residues: Semaphorin-3C (751 aa).

The first 20 residues, 1–20, serve as a signal peptide directing secretion; it reads MAFRAICVLVGVFICSICVR. A Sema domain is found at 28–511; sequence RVYLTFDELR…SNEGVSQVSL (484 aa). N-linked (GlcNAc...) asparagine glycosylation is present at Asn81. The cysteines at positions 101 and 112 are disulfide-linked. N-linked (GlcNAc...) asparagine glycosylation is present at Asn123. Cys130 and Cys139 are joined by a disulfide. N-linked (GlcNAc...) asparagine glycans are attached at residues Asn252 and Asn268. 2 disulfide bridges follow: Cys266–Cys378 and Cys290–Cys338. Asn465 carries N-linked (GlcNAc...) asparagine glycosylation. A disulfide bridge connects residues Cys514 and Cys532. The Ig-like C2-type domain occupies 571-655; that stretch reads AYRNAAEIVQ…TENSFKQTIA (85 aa). 2 N-linked (GlcNAc...) asparagine glycosylation sites follow: Asn585 and Asn586. Cys643 and Cys709 are oxidised to a cystine.

The protein belongs to the semaphorin family. Interacts with PLXND1.

The protein localises to the secreted. Functionally, binds to plexin family members and plays an important role in the regulation of developmental processes. Required for normal cardiovascular development during embryogenesis. Functions as attractant for growing axons, and thereby plays an important role in axon growth and axon guidance. The protein is Semaphorin-3C (Sema3c) of Mus musculus (Mouse).